The chain runs to 237 residues: Uridylate kinase (237 aa).

12–15 (KLSG) is a binding site for ATP. The tract at residues 20–25 (GDEGFG) is involved in allosteric activation by GTP. G54 is a binding site for UMP. ATP is bound by residues G55 and R59. Residues D74 and 135 to 142 (TGSPFFTT) each bind UMP. The ATP site is built by T162, Y168, and D171.

Belongs to the UMP kinase family. In terms of assembly, homohexamer.

It localises to the cytoplasm. It catalyses the reaction UMP + ATP = UDP + ADP. It participates in pyrimidine metabolism; CTP biosynthesis via de novo pathway; UDP from UMP (UMPK route): step 1/1. Allosterically activated by GTP. Inhibited by UTP. Functionally, catalyzes the reversible phosphorylation of UMP to UDP. In Actinobacillus pleuropneumoniae serotype 5b (strain L20), this protein is Uridylate kinase.